The following is a 422-amino-acid chain: Putidaredoxin reductase CamA (422 aa).

Positions 15, 37, 50, 83, and 134 each coordinate FAD. 156-165 (GGGYIGLEVA) contributes to the NAD(+) binding site. FAD is bound by residues Asp284 and Val302.

The protein belongs to the FAD-dependent oxidoreductase family. In terms of assembly, homodimer or monomer. Requires FAD as cofactor.

The enzyme catalyses 2 reduced [2Fe-2S]-[putidaredoxin] + NAD(+) + H(+) = 2 oxidized [2Fe-2S]-[putidaredoxin] + NADH. It functions in the pathway terpene metabolism; (R)-camphor degradation. Its function is as follows. The oxidation of camphor by cytochrome P450-CAM CamC requires the participation of the flavoprotein, putidaredoxin reductase CamA, and the iron-sulfur protein, putidaredoxin CamB, to mediate the transfer of electrons from NADH to P450 for oxygen activation. This is Putidaredoxin reductase CamA from Pseudomonas putida (Arthrobacter siderocapsulatus).